The sequence spans 251 residues: Protein TK1472 (251 aa).

Belongs to the CinA family.

The polypeptide is Protein TK1472 (Thermococcus kodakarensis (strain ATCC BAA-918 / JCM 12380 / KOD1) (Pyrococcus kodakaraensis (strain KOD1))).